The primary structure comprises 395 residues: LIM/homeobox protein Lhx3 (395 aa).

2 consecutive LIM zinc-binding domains span residues 28-78 and 87-141; these read CAGC…CKDD and CAAC…CKAD. A DNA-binding region (homeobox) is located at residues 154–213; the sequence is AKRPRTTITAKQLETLKNAYNNSPKPARHVREQLSSETGLDMRVVQVWFQNRRAKEKRLK. 2 disordered regions span residues 208 to 304 and 363 to 383; these read KEKR…QDQY and GPSS…PVSP. Positions 257–278 are enriched in polar residues; it reads DEPSMSEMNHSNGIYNSLNDSS.

In terms of assembly, interacts with ldb1 and with the N-terminus of rnf12. In terms of tissue distribution, in dorsal regions at neural tube and tailbud stages and in adults predominantly in the pituitary gland and weakly in the eye and brain.

It is found in the nucleus. In terms of biological role, transcription factor. May be involved in the specification and maintenance of differentiation of distinct neuronal and neuroendocrine tissues. Early marker for the pituitary and pineal lineages, it may be involved in specifying these lineages. In Xenopus laevis (African clawed frog), this protein is LIM/homeobox protein Lhx3 (lhx3).